The primary structure comprises 1041 residues: RAS protein activator like-3 (1041 aa).

The tract at residues 1-59 is disordered; that stretch reads MKPECGQTMFRTFWSRSRDSSAMDPPLQSEEDSQTQPSLPSPLTSYRWHTGGSGEKAAG. The segment covering 34–44 has biased composition (polar residues); that stretch reads QTQPSLPSPLT. 10 positions are modified to phosphoserine: S41, S74, S187, S189, S190, S193, S239, S252, S256, and S259. The stretch at 218-243 forms a coiled coil; sequence SNQVHNVRKLLKRLKEKKRAKSELGA. The 102-residue stretch at 220–321 folds into the PH domain; the sequence is QVHNVRKLLK…WIEDLRRQFQ (102 aa). Residues 234–256 are disordered; the sequence is KKRAKSELGAYTPRDGPPSALGS. Position 262 is a phosphothreonine (T262). Positions 312-430 constitute a C2 domain; the sequence is WIEDLRRQFQ…APAAGLERWF (119 aa). In terms of domain architecture, Ras-GAP spans 500–708; sequence GRAQALVTDL…PAMQHFLDQV (209 aa). Positions 790–910 are disordered; it reads GEKPGFLAPR…PGDRYQTTGT (121 aa). Phosphoserine occurs at positions 813 and 816. Positions 850 to 866 are enriched in basic residues; sequence RPTHRRPSAGSKPRPKG. Residues 931–1013 are a coiled coil; sequence QKALSLLVES…LRDSLQSLQL (83 aa). The tract at residues 1016–1041 is disordered; it reads KTPGSRSQPLPLKAPCVNGADLSMGT.

As to expression, predominantly expressed in hematopoietic tissues.

The protein resides in the cytoplasm. It is found in the cell cortex. Its function is as follows. Functions as a Ras GTPase-activating protein. Plays an important role in the expansion and functions of natural killer T (NKT) cells in the liver by negatively regulating RAS activity and the down-stream ERK signaling pathway. The polypeptide is RAS protein activator like-3 (Rasal3) (Mus musculus (Mouse)).